Reading from the N-terminus, the 315-residue chain is Glucokinase-like protein CC_3167 (315 aa).

This sequence belongs to the bacterial glucokinase family.

This Caulobacter vibrioides (strain ATCC 19089 / CIP 103742 / CB 15) (Caulobacter crescentus) protein is Glucokinase-like protein CC_3167.